The following is a 503-amino-acid chain: Maturase K (503 aa).

Belongs to the intron maturase 2 family. MatK subfamily.

It localises to the plastid. Its subcellular location is the chloroplast. Functionally, usually encoded in the trnK tRNA gene intron. Probably assists in splicing its own and other chloroplast group II introns. This Purshia tridentata (Antelope bitterbrush) protein is Maturase K.